We begin with the raw amino-acid sequence, 138 residues long: Large ribosomal subunit protein mL54 (138 aa).

The N-terminal 16 residues, 1 to 16 (MAARRLFGATGSWARW), are a transit peptide targeting the mitochondrion.

Belongs to the mitochondrion-specific ribosomal protein mL54 family. In terms of assembly, component of the mitochondrial ribosome large subunit (39S) which comprises a 16S rRNA and about 50 distinct proteins.

The protein resides in the mitochondrion. This chain is Large ribosomal subunit protein mL54 (MRPL54), found in Bos taurus (Bovine).